The chain runs to 494 residues: UDP-N-acetylmuramoyl-L-alanyl-D-glutamate--L-lysine ligase (494 aa).

Position 30 (Ser30) interacts with UDP-N-acetyl-alpha-D-muramoyl-L-alanyl-D-glutamate. 110–116 (GTNGKTS) contributes to the ATP binding site. UDP-N-acetyl-alpha-D-muramoyl-L-alanyl-D-glutamate contacts are provided by residues 152–153 (TT), Ser179, and Arg187. The residue at position 219 (Lys219) is an N6-carboxylysine. The L-lysine recognition motif motif lies at 406–409 (DNPA).

It belongs to the MurCDEF family. MurE subfamily. In terms of processing, carboxylation is probably crucial for Mg(2+) binding and, consequently, for the gamma-phosphate positioning of ATP.

The protein resides in the cytoplasm. It carries out the reaction UDP-N-acetyl-alpha-D-muramoyl-L-alanyl-D-glutamate + L-lysine + ATP = UDP-N-acetyl-alpha-D-muramoyl-L-alanyl-gamma-D-glutamyl-L-lysine + ADP + phosphate + H(+). The protein operates within cell wall biogenesis; peptidoglycan biosynthesis. Functionally, catalyzes the addition of L-lysine to the nucleotide precursor UDP-N-acetylmuramoyl-L-alanyl-D-glutamate (UMAG) in the biosynthesis of bacterial cell-wall peptidoglycan. The sequence is that of UDP-N-acetylmuramoyl-L-alanyl-D-glutamate--L-lysine ligase from Staphylococcus haemolyticus (strain JCSC1435).